Reading from the N-terminus, the 335-residue chain is Methionine import ATP-binding protein MetN 2 (335 aa).

The ABC transporter domain occupies 2-242 (IEFHDVHKTY…PQHPTTRRFV (241 aa)). 38-45 (GHSGAGKS) lines the ATP pocket.

It belongs to the ABC transporter superfamily. Methionine importer (TC 3.A.1.24) family. In terms of assembly, the complex is composed of two ATP-binding proteins (MetN), two transmembrane proteins (MetI) and a solute-binding protein (MetQ).

The protein resides in the cell inner membrane. The enzyme catalyses L-methionine(out) + ATP + H2O = L-methionine(in) + ADP + phosphate + H(+). It catalyses the reaction D-methionine(out) + ATP + H2O = D-methionine(in) + ADP + phosphate + H(+). Its function is as follows. Part of the ABC transporter complex MetNIQ involved in methionine import. Responsible for energy coupling to the transport system. The sequence is that of Methionine import ATP-binding protein MetN 2 from Pseudomonas aeruginosa (strain UCBPP-PA14).